The sequence spans 445 residues: MIRLETRFASSFIQSSKLEPFLEKSESARLTLHSSQGQGKEYLGWLYLPKELKNSEIERMTQVAERLRNSSEVIVVIGIGGSYLGSRAVLEATLPFFKKPSIGNPEIIFAGHHLESRYFSELIEYLEDKNFSINVISKSGTTTEPAIAFRLLWELLRKKYGSSASSRVVATTDSSKGVLKKFADSEKLDTFTIPDNVGGRYSVLTPVGLFPLAVAGISISKFILGFQNILNDIHSITDPTRNPATYYSALRNYFLSEGRYIEVLANFNPSLRYVSEWWKQLFGESEGKENKGIFPASMDFTTDLHSLGQYIQEGKRILFETVLSPSEVCSNLTLKPTQDNLDSLNFLSGNTLGYVNEQARLGTLLAHADGGVPCLELVFPDISPQSLGELMYFFEYSCAISGYSLGVNPFDQPGVEAYKKNMFALLNKPGFEQEGETLRKRISRN.

Residue E284 is the Proton donor of the active site. Active-site residues include H305 and K419.

This sequence belongs to the GPI family.

The protein localises to the cytoplasm. The enzyme catalyses alpha-D-glucose 6-phosphate = beta-D-fructose 6-phosphate. It functions in the pathway carbohydrate biosynthesis; gluconeogenesis. It participates in carbohydrate degradation; glycolysis; D-glyceraldehyde 3-phosphate and glycerone phosphate from D-glucose: step 2/4. Functionally, catalyzes the reversible isomerization of glucose-6-phosphate to fructose-6-phosphate. The chain is Glucose-6-phosphate isomerase from Leptospira interrogans serogroup Icterohaemorrhagiae serovar Lai (strain 56601).